A 177-amino-acid chain; its full sequence is Large ribosomal subunit protein uL6 (177 aa).

It belongs to the universal ribosomal protein uL6 family. In terms of assembly, part of the 50S ribosomal subunit.

In terms of biological role, this protein binds to the 23S rRNA, and is important in its secondary structure. It is located near the subunit interface in the base of the L7/L12 stalk, and near the tRNA binding site of the peptidyltransferase center. In Nitrobacter winogradskyi (strain ATCC 25391 / DSM 10237 / CIP 104748 / NCIMB 11846 / Nb-255), this protein is Large ribosomal subunit protein uL6.